Reading from the N-terminus, the 429-residue chain is Serine--tRNA ligase (429 aa).

236 to 238 (TAE) lines the L-serine pocket. 267 to 269 (RSE) serves as a coordination point for ATP. Residue glutamate 290 participates in L-serine binding. 354–357 (EISS) is a binding site for ATP. Position 390 (serine 390) interacts with L-serine.

It belongs to the class-II aminoacyl-tRNA synthetase family. Type-1 seryl-tRNA synthetase subfamily. Homodimer. The tRNA molecule binds across the dimer.

Its subcellular location is the cytoplasm. It carries out the reaction tRNA(Ser) + L-serine + ATP = L-seryl-tRNA(Ser) + AMP + diphosphate + H(+). It catalyses the reaction tRNA(Sec) + L-serine + ATP = L-seryl-tRNA(Sec) + AMP + diphosphate + H(+). It functions in the pathway aminoacyl-tRNA biosynthesis; selenocysteinyl-tRNA(Sec) biosynthesis; L-seryl-tRNA(Sec) from L-serine and tRNA(Sec): step 1/1. In terms of biological role, catalyzes the attachment of serine to tRNA(Ser). Is also able to aminoacylate tRNA(Sec) with serine, to form the misacylated tRNA L-seryl-tRNA(Sec), which will be further converted into selenocysteinyl-tRNA(Sec). This chain is Serine--tRNA ligase, found in Alcanivorax borkumensis (strain ATCC 700651 / DSM 11573 / NCIMB 13689 / SK2).